Here is a 327-residue protein sequence, read N- to C-terminus: MGSLSEWVQQGWYKGSPWLVPLRPLSALVSFEARRRLQRFRKQRPRPPVPVLVVGNITVGGTGKTPLVIALVEAARSRGLKVAVVSRGFAGKTNHYPQHVTASSDALDMGDEPVLIARRTGVPVVLDPDRRNALDVAIREYAPDLVISDDGLQHYALPRSAEVVVVDAQRGLGNGRCLPEGPLREPATRLKEVDFVISTGGGWAGAYPMIMRPSGVTCLADNRTLTPDDFLRLHPQVHAVAGIGNPKRFFNLLSILGLSATPHVFPDHHAYQPADLAFTDGLPVLMTEKDAVKCAPFAEPHWWFVPVTASLPEGLLDQMLDRALGKE.

58 to 65 contacts ATP; sequence TVGGTGKT.

This sequence belongs to the LpxK family.

The catalysed reaction is a lipid A disaccharide + ATP = a lipid IVA + ADP + H(+). Its pathway is glycolipid biosynthesis; lipid IV(A) biosynthesis; lipid IV(A) from (3R)-3-hydroxytetradecanoyl-[acyl-carrier-protein] and UDP-N-acetyl-alpha-D-glucosamine: step 6/6. In terms of biological role, transfers the gamma-phosphate of ATP to the 4'-position of a tetraacyldisaccharide 1-phosphate intermediate (termed DS-1-P) to form tetraacyldisaccharide 1,4'-bis-phosphate (lipid IVA). The chain is Tetraacyldisaccharide 4'-kinase from Alcanivorax borkumensis (strain ATCC 700651 / DSM 11573 / NCIMB 13689 / SK2).